The sequence spans 297 residues: Urease accessory protein UreD 2 (297 aa).

The protein belongs to the UreD family. UreD, UreF and UreG form a complex that acts as a GTP-hydrolysis-dependent molecular chaperone, activating the urease apoprotein by helping to assemble the nickel containing metallocenter of UreC. The UreE protein probably delivers the nickel.

It localises to the cytoplasm. Its function is as follows. Required for maturation of urease via the functional incorporation of the urease nickel metallocenter. In Methylorubrum populi (strain ATCC BAA-705 / NCIMB 13946 / BJ001) (Methylobacterium populi), this protein is Urease accessory protein UreD 2.